A 422-amino-acid polypeptide reads, in one-letter code: Serine protease HTRA2, mitochondrial (422 aa).

The transit peptide at 1-17 (MALRGSHRLQVILKRCI) directs the protein to the mitochondrion. A propeptide spanning residues 18–74 (ASPLFHSHAPNRRSSQPAIKGGEPNSNGNSGHDQQNGERKGKGWRRLVSFFVPFSLG) is cleaved from the precursor. The segment at 24 to 56 (SHAPNRRSSQPAIKGGEPNSNGNSGHDQQNGER) is disordered. Over residues 41 to 51 (PNSNGNSGHDQ) the composition is skewed to polar residues. The chain crosses the membrane as a helical span at residues 64-82 (LVSFFVPFSLGAVVSAAVI). Short sequence motifs (IAP-binding) lie at residues 75–78 (AVVS) and 94–97 (SKMT). Positions 139–302 (SNGSGFIIEQ…IPIDYVKVFL (164 aa)) are serine protease. Residues H157, D189, and S266 each act as charge relay system in the active site. Positions 325-410 (MGITMLTLTP…NLDIVILRGV (86 aa)) constitute a PDZ domain.

The protein belongs to the peptidase S1C family. In terms of assembly, interacts with th/DIAP1 (via BIR 2 domain).

The protein localises to the mitochondrion intermembrane space. It localises to the mitochondrion membrane. It carries out the reaction Cleavage of non-polar aliphatic amino-acids at the P1 position, with a preference for Val, Ile and Met. At the P2 and P3 positions, Arg is selected most strongly with a secondary preference for other hydrophilic residues.. Functionally, serine protease that shows proteolytic activity against a non-specific substrate beta-casein. Promotes or induces cell death either by direct binding to and inhibition of BIRC proteins (also called inhibitor of apoptosis proteins, IAPs), leading to an increase in caspase activity, or by a BIRC inhibition-independent, caspase-independent and serine protease activity-dependent mechanism. Can antagonize antiapoptotic activity of th/Diap1 by directly inducing the degradation of th/Diap1. This chain is Serine protease HTRA2, mitochondrial, found in Drosophila erecta (Fruit fly).